A 757-amino-acid polypeptide reads, in one-letter code: Xylosyl- and glucuronyltransferase LARGE1 (757 aa).

Residues 1-10 lie on the Cytoplasmic side of the membrane; sequence MLGMCRGRRK. Residues 11-31 form a helical; Signal-anchor for type II membrane protein membrane-spanning segment; the sequence is FVAASLALIFIPALTWLYLSS. Over 32–757 the chain is Lumenal; sequence ANITVKPLPL…LKYMTVDNNS (726 aa). Positions 50-82 form a coiled coil; it reads AVVGAAAEHQSLELRLRDVEEHNNALRREISRT. The segment at 76–127 is disordered; that stretch reads RREISRTPRVPTHSSHPSSSRHGNQLHTHSTEEGTGDSEAKKGAAAGNSSDC. The span at 82–97 shows a compositional bias: low complexity; the sequence is TPRVPTHSSHPSSSRH. Asn-123 and Asn-149 each carry an N-linked (GlcNAc...) asparagine glycan. The xylosyltransferase activity stretch occupies residues 139-414; it reads IHIAIVCAGY…FLEYDGNLLR (276 aa). 2 residues coordinate Mn(2+): Asp-243 and Asp-245. The N-linked (GlcNAc...) asparagine glycan is linked to Asn-273. The interval 415–757 is glucuronyltransferase activity; that stretch reads RELFGCPSET…LKYMTVDNNS (343 aa). The Mn(2+) site is built by Asp-564 and Asp-566. Asn-738 carries N-linked (GlcNAc...) asparagine glycosylation.

In the C-terminal section; belongs to the glycosyltransferase 49 family. The protein in the N-terminal section; belongs to the glycosyltransferase 8 family. The cofactor is Mn(2+).

It is found in the golgi apparatus membrane. It carries out the reaction 3-O-[beta-D-GlcA-(1-&gt;3)-beta-D-Xyl-(1-&gt;4)-Rib-ol-P-Rib-ol-P-3-beta-D-GalNAc-(1-&gt;3)-beta-D-GlcNAc-(1-&gt;4)-(O-6-P-alpha-D-Man)]-Thr-[protein] + UDP-alpha-D-xylose = 3-O-[alpha-D-Xyl-(1-&gt;3)-beta-D-GlcA-(1-&gt;4)-beta-D-Xyl-(1-&gt;4)-Rib-ol-P-Rib-ol-P-3-beta-D-GalNAc-(1-&gt;3)-beta-D-GlcNAc-(1-&gt;4)-(O-6-P-alpha-D-Man)]-Thr-[protein] + UDP + H(+). It catalyses the reaction 3-O-{(1-&gt;[3)-alpha-D-Xyl-(1-&gt;3)-beta-D-GlcA-(1-&gt;](n)-4)-beta-D-Xyl-(1-&gt;4)-Rib-ol-P-Rib-ol-P-3-beta-D-GalNAc-(1-&gt;3)-beta-D-GlcNAc-(1-&gt;4)-O-6-P-alpha-D-Man}-L-Thr-[protein] + UDP-alpha-D-glucuronate = 3-O-{beta-D-GlcA-(1-&gt;[3)-alpha-D-Xyl-(1-&gt;3)-beta-D-GlcA-(1-&gt;](n)-4)-beta-D-Xyl-(1-&gt;4)-Rib-ol-P-Rib-ol-P-3-beta-D-GalNAc-(1-&gt;3)-beta-D-GlcNAc-(1-&gt;4)-O-6-P-alpha-D-Man}-L-Thr-[protein] + UDP + H(+). The catalysed reaction is 3-O-{beta-D-GlcA-(1-&gt;[3)-alpha-D-Xyl-(1-&gt;3)-beta-D-GlcA-(1-&gt;](n)-4)-beta-D-Xyl-(1-&gt;4)-Rib-ol-P-Rib-ol-P-3-beta-D-GalNAc-(1-&gt;3)-beta-D-GlcNAc-(1-&gt;4)-O-6-P-alpha-D-Man}-L-Thr-[protein] + UDP-alpha-D-xylose = 3-O-{(1-&gt;[3)-alpha-D-Xyl-(1-&gt;3)-beta-D-GlcA-(1-&gt;](n+1)-4)-beta-D-Xyl-(1-&gt;4)-Rib-ol-P-Rib-ol-P-3-beta-D-GalNAc-(1-&gt;3)-beta-D-GlcNAc-(1-&gt;4)-O-6-P-alpha-D-Man}-L-Thr-[protein] + UDP + H(+). It functions in the pathway protein modification; protein glycosylation. Bifunctional glycosyltransferase with both alpha-1,3-xylosyltransferase and beta-1,3-glucuronyltransferase activities involved in the maturation of alpha-dystroglycan (DAG1) by glycosylation leading to DAG1 binding to laminin G-like domain-containing extracellular proteins with high affinity. Elongates the glucuronyl-beta-1,4-xylose-beta disaccharide primer structure initiated by B4GAT1 by adding repeating units [-3-Xylose-alpha-1,3-GlcA-beta-1-] to produce a heteropolysaccharide. Requires the phosphorylation of core M3 (O-mannosyl trisaccharide) by POMK to elongate the glucuronyl-beta-1,4-xylose-beta disaccharide primer. Plays a key role in skeletal muscle function and regeneration. This Danio rerio (Zebrafish) protein is Xylosyl- and glucuronyltransferase LARGE1.